The sequence spans 287 residues: Bifunctional protein FolD (287 aa).

Residues 164–166 (GSS), Ser-189, and Ile-230 each bind NADP(+).

Belongs to the tetrahydrofolate dehydrogenase/cyclohydrolase family. As to quaternary structure, homodimer.

The enzyme catalyses (6R)-5,10-methylene-5,6,7,8-tetrahydrofolate + NADP(+) = (6R)-5,10-methenyltetrahydrofolate + NADPH. It catalyses the reaction (6R)-5,10-methenyltetrahydrofolate + H2O = (6R)-10-formyltetrahydrofolate + H(+). Its pathway is one-carbon metabolism; tetrahydrofolate interconversion. In terms of biological role, catalyzes the oxidation of 5,10-methylenetetrahydrofolate to 5,10-methenyltetrahydrofolate and then the hydrolysis of 5,10-methenyltetrahydrofolate to 10-formyltetrahydrofolate. This is Bifunctional protein FolD from Aliarcobacter butzleri (strain RM4018) (Arcobacter butzleri).